Reading from the N-terminus, the 212-residue chain is Stringent starvation protein A (212 aa).

Positions 9–87 (SVMTLFSGPT…YLDERFPHPP (79 aa)) constitute a GST N-terminal domain. The 118-residue stretch at 92–209 (YPVARGESRL…LTEAEREMRL (118 aa)) folds into the GST C-terminal domain.

This sequence belongs to the GST superfamily. HSP26 family.

Its function is as follows. Forms an equimolar complex with the RNA polymerase holoenzyme (RNAP) but not with the core enzyme. In Escherichia coli O157:H7, this protein is Stringent starvation protein A (sspA).